We begin with the raw amino-acid sequence, 5125 residues long: Usherin (5125 aa).

The N-terminal stretch at 1 to 33 (MYYLALSSGFLGQAIKTSILAYLASVLLAASQG) is a signal peptide. N-linked (GlcNAc...) asparagine glycans are attached at residues N120, N229, N257, N273, N414, N447, and N468. The region spanning 273–513 (NVSLTNREIL…AVDEITIIGR (241 aa)) is the Laminin N-terminal domain. Intrachain disulfides connect C514–C523, C516–C532, C534–C545, C548–C568, C571–C580, C573–C601, C604–C613, C616–C634, C637–C651, C639–C658, C660–C669, C672–C687, C690–C704, C692–C711, C713–C722, C725–C740, C743–C755, C745–C762, C764–C773, C776–C788, C791–C804, C793–C811, C813–C822, C825–C840, C843–C857, C845–C864, C866–C875, C878–C893, C896–C909, C898–C916, C918–C927, C930–C944, C947–C959, C949–C966, C981–C995, C998–C1010, C1000–C1017, C1019–C1028, and C1031–C1046. 10 Laminin EGF-like domains span residues 514 to 570 (CQCH…NCKP), 571 to 636 (CQCH…VCKH), 637 to 689 (CDCN…CCRP), 690 to 742 (CDCN…GCEP), 743 to 790 (CHCN…ACEV), 791 to 842 (CDCN…LCLP), 843 to 895 (CNCE…GCQA), 896 to 946 (CDCD…GCLP), 947 to 997 (CLCH…RCRP), and 998 to 1048 (CHCH…ACSK). N-linked (GlcNAc...) asparagine glycosylation is present at N646. N-linked (GlcNAc...) asparagine glycosylation is found at N835 and N852. N884 carries an N-linked (GlcNAc...) asparagine glycan. The N-linked (GlcNAc...) asparagine glycan is linked to N940. An N-linked (GlcNAc...) asparagine glycan is attached at N1007. Fibronectin type-III domains follow at residues 1054 to 1142 (PPPR…TKPE), 1146 to 1240 (GHLN…APPQ), 1241 to 1356 (RQEP…SAPV), and 1357 to 1461 (FMAA…AAPA). N-linked (GlcNAc...) asparagine glycosylation is found at N1067, N1149, N1170, N1221, N1304, and N1381. Laminin G-like domains lie at 1510 to 1697 (TKGT…WEGC) and 1702 to 1879 (EEGV…QDGC). Intrachain disulfides connect C1660/C1697 and C1850/C1879. 29 Fibronectin type-III domains span residues 1857–1943 (TRGA…SAPH), 1945–2042 (VPTP…TPQE), 2043–2132 (APQE…LPPE), 2133–2230 (RVDP…TVPE), 2231–2318 (GVPA…APPE), 2319–2421 (GTVN…MPPG), 2425–2519 (GLLS…TTED), 2520–2613 (KPGP…TPEG), 2614–2709 (IPGP…TRPS), 2713–2806 (GVQP…THPA), 2807–2910 (LPQE…TLAG), 2914–3005 (RGAT…TWEE), 3009–3099 (GMRP…TPSG), 3380–3485 (ATEE…TRED), 3486–3577 (VPQG…TRGV), 3580–3670 (SVPP…AAPQ), 3672–3762 (VWVT…TPED), 3765–3852 (PPCN…TLEA), 3853–3950 (APVG…TLEA), 3951–4054 (PPQD…SAPS), 4055–4143 (GLMN…APPD), 4144–4251 (SQMA…APPD), 4252–4344 (GLSP…ASPA), 4345–4432 (GVSP…APPE), 4433–4517 (DMDP…TSPS), 4518–4620 (APSG…IPPL), 4625–4720 (PHLE…TGPA), 4721–4813 (PPEG…THPA), and 4814–4916 (PPSG…TKKE). Residues 1930–1950 (SDWSRGRTLGSAPHSVPTPSR) form a disordered region.

In terms of assembly, interacts with collagen IV and fibronectin via its laminin EGF-like domains. Interaction with collagen may be required for stable integration into the basement membrane. Interacts with NINL. Interacts with USH1C. Interacts (via the cytoplasmic region) with PDZD7. Component of USH2 complex, composed of ADGRV1, PDZD7, USH2A and WHRN. Interacts with ADGRV1/MASS1 (via N-terminal PDZ domain). Interacts (via the cytoplasmic region) with WHRN. Interacts (via the cytoplasmic region) with VEZT and MYO7A (via MyTH4-FERM domains); the interaction associates VEZT with the USH2 complex at the stereocilia base. As to expression, present in the synaptic terminals of inner ear hair cells (at protein level). Predominantly expressed in the retina and cochlea. Weakly expressed in brain and kidney. Detectable from E17 in the neural epithelium, but not in the retinal pigment epithelium (RPE) of the developing retina. After birth, it is expressed at P7 and remains expressed during adulthood.

The protein localises to the secreted. Its subcellular location is the cell projection. The protein resides in the stereocilium membrane. It is found in the photoreceptor inner segment. Functionally, involved in hearing and vision as member of the USH2 complex. In the inner ear, required for the hair bundle ankle formation, which connects growing stereocilia in developing cochlear hair cells. In retina photoreceptors, the USH2 complex is required for the maintenance of periciliary membrane complex that seems to play a role in regulating intracellular protein transport. In Rattus norvegicus (Rat), this protein is Usherin (Ush2a).